Here is a 295-residue protein sequence, read N- to C-terminus: Acetylglutamate kinase (295 aa).

Substrate contacts are provided by residues 67-68 (GG), Arg-89, and Asn-191.

The protein belongs to the acetylglutamate kinase family. ArgB subfamily.

It is found in the cytoplasm. The enzyme catalyses N-acetyl-L-glutamate + ATP = N-acetyl-L-glutamyl 5-phosphate + ADP. It participates in amino-acid biosynthesis; L-arginine biosynthesis; N(2)-acetyl-L-ornithine from L-glutamate: step 2/4. In terms of biological role, catalyzes the ATP-dependent phosphorylation of N-acetyl-L-glutamate. This chain is Acetylglutamate kinase, found in Nitrosomonas eutropha (strain DSM 101675 / C91 / Nm57).